The primary structure comprises 321 residues: uncharacterized protein (321 aa).

Residues 1–80 are disordered; sequence MQGGQEVGRE…GELSGGWGEF (80 aa).

This is an uncharacterized protein from Mus musculus (Mouse).